The following is a 110-amino-acid chain: Ig kappa chain V region 2717 (110 aa).

The tract at residues Val1–Cys23 is framework-1. The segment at Gln24 to Ala36 is complementarity-determining-1. Residues Trp37–Tyr51 form a framework-2 region. The tract at residues Thr52–Ser58 is complementarity-determining-2. Positions Gly59–Cys90 are framework-3. The interval Gly91–Ser99 is complementarity-determining-3. A framework-4 region spans residues Phe100–Lys109.

The sequence is that of Ig kappa chain V region 2717 from Oryctolagus cuniculus (Rabbit).